The following is a 94-amino-acid chain: Large ribosomal subunit protein bL27 (94 aa).

The propeptide occupies 1 to 9 (MLKMNLQFF).

It belongs to the bacterial ribosomal protein bL27 family. Post-translationally, the N-terminus is cleaved by ribosomal processing cysteine protease Prp.

The chain is Large ribosomal subunit protein bL27 from Halalkalibacterium halodurans (strain ATCC BAA-125 / DSM 18197 / FERM 7344 / JCM 9153 / C-125) (Bacillus halodurans).